The primary structure comprises 137 residues: MADTKTATPATDAEEATATPPAAAPSSEAYAIVEASGTQMWVQANRYYDVDRLHAEVDETIKLENVLMVKDSKGTTLGQPFVKDATVALKVMAHRRGPKVIVYKMRPKKKTRRKNGHRQELTRVMVESITVGGKAIS.

Residues 1–26 form a disordered region; sequence MADTKTATPATDAEEATATPPAAAPS.

This sequence belongs to the bacterial ribosomal protein bL21 family. In terms of assembly, part of the 50S ribosomal subunit. Contacts protein L20.

Its function is as follows. This protein binds to 23S rRNA in the presence of protein L20. This is Large ribosomal subunit protein bL21 from Parasynechococcus marenigrum (strain WH8102).